Here is a 1091-residue protein sequence, read N- to C-terminus: Ninein homolog (1091 aa).

Residues 1-361 (MEVSADPYEQ…AVEVDERHAS (361 aa)) form a sufficient for binding to microtubules region. 4 disordered regions span residues 100–216 (YIES…TTSP), 456–483 (AQTSSSIGGTPEHSPLRPRRHSEDKEEE), 525–602 (KAKK…EELT), and 616–639 (KAAKEGRSLTPESRSKELETSLEQ). Phosphoserine occurs at positions 103, 107, 108, 113, and 141. Residue T144 is modified to Phosphothreonine. Residues 168 to 177 (VQRSSSQSDL) are compositionally biased toward polar residues. The tract at residues 487–526 (LMEKLAALQMENAQLRDKTDELTIEIESLNVELIRSKTKA) is sufficient for interaction with ens. Composition is skewed to basic and acidic residues over residues 527-537 (KKQEKQEKQED) and 547-563 (RRGDSPSKTHLTEESPR). At S594 the chain carries Phosphoserine. Basic and acidic residues predominate over residues 616 to 634 (KAAKEGRSLTPESRSKELE). A phosphoserine mark is found at S701 and S714. The interval 799-919 (AKSLADSKDE…TSCLSHEKCS (121 aa)) is disordered. Positions 822-845 (SHKTASRNNLTTSETSIFSTTPFE) are enriched in polar residues. Residues 846–860 (SSQSGPSPTNSGNSN) show a composition bias toward low complexity. Residues 894–913 (ETSSTASGKSFESNSKTSCL) are compositionally biased toward polar residues.

Interacts with ens.

Its subcellular location is the cytoplasm. It localises to the cytoskeleton. The protein resides in the microtubule organizing center. The protein localises to the centrosome. It is found in the perinuclear region. In terms of biological role, required for the positioning and anchorage of the microtubule minus-ends in various cells. In fat body cells, part of perinuclear non-centrosomal microtubule-organizing centers (ncMTOCs) which function to accommodate the organization of microtubule (MT) networks to control nuclear positioning and dynein motor-based retrograde endosomal trafficking. Within the ncMTOCs, Msp300 and shot anchors the ncMTOC at the nuclear surface and recruits the MT minus-end regulators Patronin and Nin for assembly, anchoring and/or stabilization of circumferential and radial MTs at the ncMTOC. This protein may also function with Patronin to recruit msps to the ncMTOC for the gamma-tubulin-independent elongation of radial MTs. In embryonic myotubes and larval myofibers, functions with ens to regulate myonuclear positioning and, as a consequence, is involved in muscle development. Likely functions by positively regulating ens. Essential for embryogenesis, likely by contributing to accurate chromosome segregation during early embryonic nuclear divisions. However, other reports found that it is not essential for embryogenesis or embryonic cellular divisions. This Drosophila melanogaster (Fruit fly) protein is Ninein homolog.